A 565-amino-acid polypeptide reads, in one-letter code: uncharacterized protein (565 aa).

Transmembrane regions (helical) follow at residues 4-26, 33-55, 68-90, 97-119, and 162-184; these read FVQFLGSNPYILLFLTIGLAVWV, GYGLGAVAAAIVVGCLVATVGAA, SLLYYLFMYGVGLRVGPSFVNAL, YAILAIIAPILGLAIVVLGTQFF, and ISAMIALSYGITYIWGTVGIILL. RCK C-terminal domains lie at 210-295 and 296-379; these read PNVD…LGPE and VPDA…IFGV. A run of 5 helical transmembrane segments spans residues 389-411, 415-432, 453-472, 482-504, and 539-561; these read LLTLSFGMILGFLIGLIEVPAFG, GLGNAGGLLLSGIIVSSI, LGLIGFVAIVGINAGADLLT, IFIVGFLASTIPPIIVWAIGFHI, and WLGFPVGYAVSGVLLTVFGYFAM.

Belongs to the AAE transporter (TC 2.A.81) family.

Its subcellular location is the cell membrane. This is an uncharacterized protein from Bordetella bronchiseptica (strain ATCC BAA-588 / NCTC 13252 / RB50) (Alcaligenes bronchisepticus).